A 141-amino-acid chain; its full sequence is Aspartate 1-decarboxylase 1 (141 aa).

The Schiff-base intermediate with substrate; via pyruvic acid role is filled by serine 25. Serine 25 bears the Pyruvic acid (Ser) mark. Threonine 57 is a binding site for substrate. Catalysis depends on tyrosine 58, which acts as the Proton donor. 73-75 (GPA) contacts substrate.

Belongs to the PanD family. In terms of assembly, heterooctamer of four alpha and four beta subunits. It depends on pyruvate as a cofactor. Post-translationally, is synthesized initially as an inactive proenzyme, which is activated by self-cleavage at a specific serine bond to produce a beta-subunit with a hydroxyl group at its C-terminus and an alpha-subunit with a pyruvoyl group at its N-terminus.

It is found in the cytoplasm. The enzyme catalyses L-aspartate + H(+) = beta-alanine + CO2. It functions in the pathway cofactor biosynthesis; (R)-pantothenate biosynthesis; beta-alanine from L-aspartate: step 1/1. Its function is as follows. Catalyzes the pyruvoyl-dependent decarboxylation of aspartate to produce beta-alanine. The protein is Aspartate 1-decarboxylase 1 of Paenarthrobacter aurescens (strain TC1).